The chain runs to 398 residues: uncharacterized protein (398 aa).

The CobW C-terminal domain occupies 235–351; the sequence is VAIVEFSARR…DIVNALNAAL (117 aa).

This is an uncharacterized protein from Mycobacterium bovis (strain ATCC BAA-935 / AF2122/97).